A 271-amino-acid polypeptide reads, in one-letter code: N-acylmannosamine 1-dehydrogenase (271 aa).

20–44 (VTGAAGGIGRATVEAYLREGASVVA) is an NAD(+) binding site. S153 is a substrate binding site. The active-site Proton acceptor is Y166.

It belongs to the short-chain dehydrogenases/reductases (SDR) family.

It carries out the reaction an N-acyl-D-mannosamine + NAD(+) = an N-acyl-D-mannosaminolactone + NADH + H(+). Acts on acetyl-D-mannosamine and glycolyl-D-mannosamine. The protein is N-acylmannosamine 1-dehydrogenase of Flavobacterium sp. (strain 141-8).